We begin with the raw amino-acid sequence, 709 residues long: ATP-binding cassette sub-family F member 3 (709 aa).

An N-acetylalanine modification is found at Ala2. Ser83 carries the phosphoserine modification. Positions 129–143 (RLKAKQEKRSEKDTL) are enriched in basic and acidic residues. The disordered stretch occupies residues 129–171 (RLKAKQEKRSEKDTLKTSNPLVLEEASASQAGSRKESRLESSG). A phosphoserine mark is found at Ser155, Ser157, and Ser161. Basic and acidic residues predominate over residues 161-171 (SRKESRLESSG). 2 ABC transporter domains span residues 178 to 424 (VRIE…LNQQ) and 492 to 707 (LQLD…RREG). 210-217 (GRNGLGKT) serves as a coordination point for ATP. Ser283 carries the phosphoserine modification. 525–532 (GENGAGKS) contributes to the ATP binding site.

This sequence belongs to the ABC transporter superfamily. ABCF family. EF3 subfamily.

Its function is as follows. Displays an antiviral effect against flaviviruses such as west Nile virus (WNV) in the presence of OAS1B. This chain is ATP-binding cassette sub-family F member 3 (ABCF3), found in Homo sapiens (Human).